The sequence spans 511 residues: Cytochrome P450 monooxygenase nodR (511 aa).

A helical transmembrane segment spans residues 8–28; it reads ILFPISWEQSPIFLAVGLIFA. N-linked (GlcNAc...) asparagine glycosylation is found at N76 and N373. Position 452 (C452) interacts with heme.

It belongs to the cytochrome P450 family. Heme serves as cofactor.

Its subcellular location is the membrane. It participates in secondary metabolite biosynthesis. Cytochrome P450 monooxygenase; part of the gene cluster that mediates the biosynthesis of the indole diterpenes nodulisporic acids (NA). Nodulisporic acid A (NAA) and its chemically modified derivatives are of particular significance because of their highly potent insecticidal activity against blood-feeding arthropods and lack of observable adverse effects on mammals, in particular the tremogenicity associated with the paspaline-derived IDTs is not observed. The geranylgeranyl diphosphate (GGPP) synthase ggs1, localized outside of the cluster, is proposed to catalyze the first step in nodulisporic acid biosynthesis via conversion of farnesyl pyrophosphate and isopentyl pyrophosphate into geranylgeranyl pyrophosphate (GGPP). Condensation of indole-3-glycerol phosphate with GGPP by the prenyl transferase nodC then forms 3-geranylgeranylindole (3-GGI). Epoxidation by the FAD-dependent monooxygenase nodM leads to a single-epoxidized-GGI that is substrate of the terpene cyclase nodB for cyclization to yield emindole SB. The terminal methyl carbon, C28, of emindole SB is then oxidized by the cytochrome P450 monooxygenase nodW to produce nodulisporic acid F (NAF), the pentacyclic core of NAA. NAF is converted to nodulisporic acid E (NAE) via prenylation. This step is probably performed by one of the indole diterpene prenyltransferases nodD1 or nodD2. Several oxidation steps performed by the FAD-linked oxidoreductase nodO and one of the cytochrome P450 monooxygenase nodR, nodX or nodZ further convert NAE to nodulisporic acid D (NAD). NAD is substrate of cytochrome P450 monooxygenase nodJ to produce the precursor of nodulisporic acid C (NAC), converted to NAC by one of the indole diterpene prenyltransferases nodD1 or nodD2. The FAD-dependent monooxygenase nodY2 then oxidizes NAC to nodulisporic acid B (NAB). Finally NAB is converted to NAA by one of the cytochrome P450 monooxygenases nodR, nodX or nodZ. The protein is Cytochrome P450 monooxygenase nodR of Hypoxylon pulicicidum.